Reading from the N-terminus, the 661-residue chain is Meiotic coiled-coil protein 1 (661 aa).

5 coiled-coil regions span residues 38-78 (LDAL…IIEE), 100-121 (RAIY…ERLS), 143-184 (DIKL…LSIK), 304-320 (ELIQ…EVDL), and 360-387 (LKRL…DNEK). 3 disordered regions span residues 410 to 446 (QNQE…LRNI), 467 to 562 (LIDR…TPAS), and 573 to 592 (LSRT…TPTQ). Residues 414 to 430 (NISSNDNSKSSPESSPP) are compositionally biased toward low complexity. Positions 436–445 (GKIENKKLRN) are enriched in basic and acidic residues. Composition is skewed to polar residues over residues 472–481 (VNQSPDTRSV), 548–562 (HNSV…TPAS), and 582–592 (FTNSLDDTPTQ).

The polypeptide is Meiotic coiled-coil protein 1 (mcp1) (Schizosaccharomyces pombe (strain 972 / ATCC 24843) (Fission yeast)).